Reading from the N-terminus, the 1368-residue chain is MQYSFTEKKRIRKSFAKRSIVHQVPFLLATQLESFSTFLQADVPTAQRKSEGLQAAFTSVFPIVSHNGFARLEFVSYALSSPAFNIKECQQRGLTYCSALRAKVRLVLLDKESPSKPVVKEVKEQEVYMGEIPLMTPTGSFVINGTERVIVSQLHRSPGVFFEHDKGKTHSSGKLLFSARIIPYRGSWLDFEFDPKDVLYFRVDRRRKMPVTILLKAIGLTPEQILANFFVFDNFTLMDEGAQMEFVPERLRGEVARFDITDREGKVIVQKDKRINAKHIRDLEAAKTKYISVPEDYLLGRVLAKNVVDGDTGEVIANANDEITEGVLEKLREAKIKEIQTLYTNDLDQGPYISSTLRVDETVDKTAARIAIYRMMRPGEPPTEEAVEALFNRLFYSEDAYDLSKVGRMKFNRRVGRDEITGPMTLQDDDILATIKILVELRNGKGEVDDIDHLGNRRVRCVGELAENQFRAGLVRVERAVKERLGQAESENLMPHDLINSKPISSAIREFFGSSQLSQFMDQTNPLSEITHKRRVSALGPGGLTRERAGFEVRDVHPTHYGRVCPIETPEGPNIGLINSLALYAHLNEYGFLETPYRKVVDSKVTDQIDYLSAIEEGRYMIAQANAAIGDDGALVDELVSSREAGETMMVTPDRIQYMDVAPSQIVSVAASLIPFLEHDDANRALMGSNMQRQAVPCLRPEKPVVGTGIERTVAVDSGTTVQALRGGVVDYVDAGRIVIRVNDDEAVAGEVGVDIYNLIKYTRSNQNTNINQRPIVKMGDKVSRGDVLADGASTDLGELALGQNMLIAFMPWNGYNFEDSILISERVVADDRYTSIHIEELNVVARDTKLGPEEITRDISNLAEVQLGRLDESGIVYIGAEVEAGDVLVGKVTPKGETQLTPEEKLLRAIFGEKASDVKDTSLRVPSGMSGTVIDVQVFTREGIQRDKRAQQIIDDELKRYRLDLNDQLRIVEGDAFQRLARMLVGKVANGGPKKLAKGTKIDQAYLEDLDHYHWFDIRLADDEAAVQLEAIKNSIEEKRHQFDLAFEEKRKKLTQGDELPPGVLKMVKVYLAVKRRLQPGDKMAGRHGNKGVVSKIVPVEDMPYMADGRPADVVLNPLGVPSRMNVGQVLEVHLGWAAKGLGWRIGEMLARQTKIEELRVFLTKIYNESGRAEDLESFSDDEILELAKNLREGVPFATPVFDGATEEEMSKMLDLAFPDDIAEQLDMNPSKNQVRLYDGRTGEPFERRVTVGYMHYLKLHHLVDDKMHARSTGPYSLVTQQPLGGKAQFGGQRFGEMEVWALEAYGASYVLQEMLTVKSDDVTGRTKVYENLVKGDHVIDAGMPESFNVLVKEIRSLGIDIDLDRN.

It belongs to the RNA polymerase beta chain family. In terms of assembly, the RNAP catalytic core consists of 2 alpha, 1 beta, 1 beta' and 1 omega subunit. When a sigma factor is associated with the core the holoenzyme is formed, which can initiate transcription.

It carries out the reaction RNA(n) + a ribonucleoside 5'-triphosphate = RNA(n+1) + diphosphate. Functionally, DNA-dependent RNA polymerase catalyzes the transcription of DNA into RNA using the four ribonucleoside triphosphates as substrates. This Burkholderia pseudomallei (strain K96243) protein is DNA-directed RNA polymerase subunit beta.